We begin with the raw amino-acid sequence, 237 residues long: UPF0053 inner membrane protein YgdQ (237 aa).

Residues 1–17 (MLFAWITDPNAWLALGT) are Periplasmic-facing. A helical transmembrane segment spans residues 18 to 38 (LTLLEIVLGIDNIIFLSLVVA). The Cytoplasmic portion of the chain corresponds to 39–50 (KLPTAQRAHARR). The helical transmembrane segment at 51-71 (LGLAGAMVMRLALLASIAWVT) threads the bilayer. Residues 72–79 (RLTNPLFT) are Periplasmic-facing. The chain crosses the membrane as a helical span at residues 80 to 100 (IFSQEISARDLILLLGGLFLI). The Cytoplasmic segment spans residues 101–124 (WKASKEIHESIEGEEEGLKTRVSS). Residues 125–145 (FLGAIVQIMLLDIIFSLDSVI) form a helical membrane-spanning segment. At 146–151 (TAVGLS) the chain is on the periplasmic side. The helical transmembrane segment at 152 to 172 (DHLFIMMAAVVIAVGVMMFAA) threads the bilayer. At 173–186 (RSIGDFVERHPSVK) the chain is on the cytoplasmic side. A helical membrane pass occupies residues 187 to 207 (MLALSFLILVGFTLILESFDI). Topologically, residues 208–209 (HV) are periplasmic. A helical membrane pass occupies residues 210–230 (PKGYIYFAMFFSIAVESLNLI). Topologically, residues 231–237 (RNKKNPL) are cytoplasmic.

The protein belongs to the UPF0053 family.

It is found in the cell inner membrane. This chain is UPF0053 inner membrane protein YgdQ (ygdQ), found in Escherichia coli O157:H7.